Reading from the N-terminus, the 410-residue chain is Protein TIC 214 (410 aa).

6 helical membrane passes run 22–42 (FVFGLICGSLLGTSMNVGSFI), 61–81 (GSAISETFFLFLILFGYIGVI), 87–107 (LEPSLTFIITVFCADTIIGFL), 131–151 (AVIVFGNPGSTWGATSLITSI), 161–181 (LFLFGVFLGIFVIGCGIGFLI), and 210–230 (LALCILILSTIYYHWQVYIGL).

The protein belongs to the TIC214 family. Part of the Tic complex.

Its subcellular location is the plastid. The protein resides in the chloroplast inner membrane. Involved in protein precursor import into chloroplasts. May be part of an intermediate translocation complex acting as a protein-conducting channel at the inner envelope. This chain is Protein TIC 214, found in Mesostigma viride (Green alga).